An 859-amino-acid polypeptide reads, in one-letter code: DNA mismatch repair protein MutS (859 aa).

622–629 (GPNMGGKS) is an ATP binding site.

Belongs to the DNA mismatch repair MutS family.

In terms of biological role, this protein is involved in the repair of mismatches in DNA. It is possible that it carries out the mismatch recognition step. This protein has a weak ATPase activity. In Syntrophomonas wolfei subsp. wolfei (strain DSM 2245B / Goettingen), this protein is DNA mismatch repair protein MutS.